The primary structure comprises 458 residues: Ammonium transporter Rh type B (458 aa).

Residues 1 to 13 (MAGSPSRAAGRRL) lie on the Cytoplasmic side of the membrane. A helical transmembrane segment spans residues 14-34 (QLPLLCLFLQGATAVLFAVFV). Residues 35-61 (RYNHKTDAALWHRSNHSNADNEFYFRY) are Extracellular-facing. Residue Asn-49 is glycosylated (N-linked (GlcNAc...) asparagine). A helical membrane pass occupies residues 62–82 (PSFQDVHAMVFVGFGFLMVFL). Residues 83–86 (QRYG) are Cytoplasmic-facing. The helical transmembrane segment at 87–107 (FSSVGFTFLLAAFALQWSTLV) threads the bilayer. Over 108–124 (QGFLHSFHGGHIHVGVE) the chain is Extracellular. A helical membrane pass occupies residues 125–145 (SMINADFCAGAVLISFGAVLG). Topologically, residues 146–149 (KTGP) are cytoplasmic. The chain crosses the membrane as a helical span at residues 150-170 (AQLLLMALLEVVLFGINEFVL). Residues 171 to 178 (LHLLGVRD) are Extracellular-facing. A helical transmembrane segment spans residues 179–201 (AGGSMTIHTFGAYFGLVLSRVLY). At 202–219 (RPQLEKSKHRQGSVYHSD) the chain is on the cytoplasmic side. Residues 220–240 (LFAMIGTIFLWIFWPSFNAAL) form a helical membrane-spanning segment. The Extracellular segment spans residues 241-251 (TALGAGQHRTA). Residues 252–272 (LNTYYSLAASTLGTFALSALV) traverse the membrane as a helical segment. Over 273–282 (GEDGRLDMVH) the chain is Cytoplasmic. The helical transmembrane segment at 283 to 303 (IQNAALAGGVVVGTSSEMMLT) threads the bilayer. Pro-304 is a topological domain (extracellular). A helical transmembrane segment spans residues 305-325 (FGALTAGFLAGTVSTLGYKFF). At 326–346 (RPILESKFKVQDTCGVHNLHG) the chain is on the cytoplasmic side. The chain crosses the membrane as a helical span at residues 347–367 (MPGVLGALLGVLVAGLATHEA). Topologically, residues 368–393 (YGDGLESVFPLIAEGQRSATSQAMHQ) are extracellular. Residues 394–414 (LFGLFVTLMFASVGGGLGGLL) form a helical membrane-spanning segment. Residues 415–458 (LKLPFLDSPPDSQCYEDQVHWQVPGEHEDKAQRPLRVEEADTQA) are Cytoplasmic-facing. An interaction with ANK3 region spans residues 416-424 (KLPFLDSPP). The short motif at 429–432 (YEDQ) is the Basolateral sorting signal element. A disordered region spans residues 439–458 (GEHEDKAQRPLRVEEADTQA).

This sequence belongs to the ammonium transporter (TC 2.A.49) family. Rh subfamily. As to quaternary structure, interacts (via C-terminus) with ANK2 and ANK3; required for targeting to the basolateral membrane. Post-translationally, N-glycosylated.

Its subcellular location is the cell membrane. The protein localises to the basolateral cell membrane. It catalyses the reaction NH4(+)(in) = NH4(+)(out). The catalysed reaction is methylamine(out) = methylamine(in). The enzyme catalyses CO2(out) = CO2(in). Ammonium transporter involved in the maintenance of acid-base homeostasis. Transports ammonium and its related derivative methylammonium across the basolateral plasma membrane of epithelial cells likely contributing to renal transepithelial ammonia transport and ammonia metabolism. May transport either NH4(+) or NH3 ammonia species predominantly mediating an electrogenic NH4(+) transport. May act as a CO2 channel providing for renal acid secretion. In Pan troglodytes (Chimpanzee), this protein is Ammonium transporter Rh type B (RHBG).